The following is a 530-amino-acid chain: uncharacterized protein (530 aa).

Composition is skewed to basic and acidic residues over residues 1–11 and 28–38; these read MTALNDTERAV and PRSEETASERP. Residues 1-38 form a disordered region; that stretch reads MTALNDTERAVRNWTAGRPHRPAPMRPPRSEETASERP. The Cytoplasmic portion of the chain corresponds to 1–50; the sequence is MTALNDTERAVRNWTAGRPHRPAPMRPPRSEETASERPSRYYPTWLPSRS. The helical transmembrane segment at 51–71 threads the bilayer; it reads FIAAVIAIGGMQLLATMDSTV. At 72–91 the chain is on the extracellular side; the sequence is AIVALPKIQNELSLSDAGRS. The chain crosses the membrane as a helical span at residues 92–112; it reads WVITAYVLTFGGLMLLGGRLG. At 113-119 the chain is on the cytoplasmic side; the sequence is DTIGRKR. A helical membrane pass occupies residues 120–140; sequence TFIVGVALFTISSVLCAVAWD. Residues 141–150 are Extracellular-facing; the sequence is EATLVIARLS. The chain crosses the membrane as a helical span at residues 151 to 171; the sequence is QGVGSAIASPTGLALVATTFP. Residues 172 to 180 are Cytoplasmic-facing; the sequence is KGPARNAAT. Residues 181–201 form a helical membrane-spanning segment; sequence AVFAAMTAIGSVMGLVVGGAL. The Extracellular segment spans residues 202 to 203; sequence TE. Residues 204-224 form a helical membrane-spanning segment; the sequence is VSWRWAFLVNVPIGLVMIYLA. Over 225-239 the chain is Cytoplasmic; that stretch reads RTALRETNKERMKLD. Residues 240–260 form a helical membrane-spanning segment; the sequence is ATGAILATLACTAAVFAFSIG. Over 261–266 the chain is Extracellular; sequence PEKGWM. A helical membrane pass occupies residues 267–287; it reads SGITIGSGLVALAAAVAFVIV. At 288 to 306 the chain is on the cytoplasmic side; that stretch reads ERTAENPVVPFHLFRDRNR. A helical membrane pass occupies residues 307 to 327; it reads LVTFSAILLAGGVMFSLTVCI. At 328–343 the chain is on the extracellular side; the sequence is GLYVQDILGYSALRAG. The helical transmembrane segment at 344–364 threads the bilayer; it reads VGFIPFVIAMGIGLGVSSQLV. Over 365 to 370 the chain is Cytoplasmic; sequence SRFSPR. The helical transmembrane segment at 371-391 threads the bilayer; that stretch reads VLTIGGGYLLFGAMLYGSFFM. The Extracellular segment spans residues 392–400; it reads HRGVPYFPN. A helical transmembrane segment spans residues 401-421; it reads LVMPIVVGGIGIGMAVVPLTL. At 422-437 the chain is on the cytoplasmic side; sequence SAIAGVGFDQIGPVSA. Residues 438–458 traverse the membrane as a helical segment; it reads IALMLQSLGGPLVLAVIQAVI. Residues 459–488 are Extracellular-facing; sequence TSRTLYLGGTTGPVKFMNDVQLAALDHAYT. The helical transmembrane segment at 489–509 threads the bilayer; sequence YGLLWVAGAAIIVGGMALFIG. Residues 510–530 lie on the Cytoplasmic side of the membrane; it reads YTPQQVAHAQEVKEAIDAGEL.

It belongs to the major facilitator superfamily.

The protein localises to the cell membrane. This is an uncharacterized protein from Mycobacterium tuberculosis (strain CDC 1551 / Oshkosh).